We begin with the raw amino-acid sequence, 393 residues long: Glutamate 5-kinase 1 (393 aa).

Lysine 17 contributes to the ATP binding site. Residues serine 57, aspartate 144, and asparagine 156 each contribute to the substrate site. 176–177 lines the ATP pocket; the sequence is SD. The PUA domain occupies 282–359; that stretch reads AGSLSIDAGA…AEIAAILGYA (78 aa).

The protein belongs to the glutamate 5-kinase family.

It is found in the cytoplasm. The catalysed reaction is L-glutamate + ATP = L-glutamyl 5-phosphate + ADP. Its pathway is amino-acid biosynthesis; L-proline biosynthesis; L-glutamate 5-semialdehyde from L-glutamate: step 1/2. Its function is as follows. Catalyzes the transfer of a phosphate group to glutamate to form L-glutamate 5-phosphate. This is Glutamate 5-kinase 1 from Rhizobium meliloti (strain 1021) (Ensifer meliloti).